The sequence spans 552 residues: Steroid transmembrane transporter SLC22A24 (552 aa).

12 helical membrane-spanning segments follow: residues 16 to 36 (FQIL…PHML), 144 to 164 (LISV…LIFG), 178 to 198 (CCLL…TFPV), 204 to 224 (FLGG…MSEW), 235 to 255 (GIIL…GFVI), 267 to 287 (IPLF…QWLI), 350 to 370 (IFYL…LMLN), 378 to 398 (IFLF…AVLL), 407 to 427 (ISQM…IFLS), 435 to 455 (VALA…HTVH), 469 to 489 (IGLN…LMIL), and 496 to 516 (LPWI…LLLP). The segment at 524–552 (PNTIQDVENNRRDSRKTKQEDISMKVTQF) is disordered. Over residues 531-546 (ENNRRDSRKTKQEDIS) the composition is skewed to basic and acidic residues.

It belongs to the major facilitator (TC 2.A.1) superfamily. Organic cation transporter (TC 2.A.1.19) family.

Its subcellular location is the cell membrane. It carries out the reaction estrone 3-sulfate(out) + glutarate(in) = estrone 3-sulfate(in) + glutarate(out). The enzyme catalyses 17beta-estradiol 17-O-(beta-D-glucuronate)(out) + glutarate(in) = 17beta-estradiol 17-O-(beta-D-glucuronate)(in) + glutarate(out). It catalyses the reaction taurocholate(out) + glutarate(in) = taurocholate(in) + glutarate(out). The catalysed reaction is glycocholate(out) + glutarate(in) = glycocholate(in) + glutarate(out). It carries out the reaction dehydroepiandrosterone 3-sulfate(out) + glutarate(in) = dehydroepiandrosterone 3-sulfate(in) + glutarate(out). The enzyme catalyses glutarate(in) + succinate(out) = glutarate(out) + succinate(in). In terms of biological role, renal transmembrane organic anion/dicarboxylate exchanger that participates in the reabsorption of conjugated steroids, as well as bile acids, driven by an outward gradient of dicarboxylates such as glutarate or succinate. Transports taurocholate, estrone 3-sulfate, and estradiol-17-glucuronide (17beta-estradiol 17-O-(beta-D-glucuronate)), but not androstanediol glucuronide (5alpha-androstane-3alpha,17beta-diol 3-O-(beta-D-glucuronate)). In Equus caballus (Horse), this protein is Steroid transmembrane transporter SLC22A24.